We begin with the raw amino-acid sequence, 1036 residues long: Mediator of RNA polymerase II transcription subunit 24 (1036 aa).

The protein belongs to the Mediator complex subunit 24 family. Component of the Mediator complex.

Its subcellular location is the nucleus. In terms of biological role, component of the Mediator complex, a coactivator involved in the regulated transcription of nearly all RNA polymerase II-dependent genes. Mediator functions as a bridge to convey information from gene-specific regulatory proteins to the basal RNA polymerase II transcription machinery. Mediator is recruited to promoters by direct interactions with regulatory proteins and serves as a scaffold for the assembly of a functional preinitiation complex with RNA polymerase II and the general transcription factors. The polypeptide is Mediator of RNA polymerase II transcription subunit 24 (MED24) (Anopheles gambiae (African malaria mosquito)).